A 294-amino-acid chain; its full sequence is 2,2',3-trihydroxybiphenyl dioxygenase (294 aa).

VOC domains follow at residues 7–120 (GYLI…LYVE) and 144–264 (GLGH…LGFG). Residues His-147, His-209, and Glu-260 each coordinate Fe cation.

This sequence belongs to the extradiol ring-cleavage dioxygenase family. In terms of assembly, monomer. The cofactor is Fe(2+).

It participates in xenobiotic degradation; dibenzo-p-dioxin degradation; 2-hydroxymuconate and catechol from dibenzo-p-dioxin: step 2/3. Its pathway is xenobiotic degradation; dibenzofuran degradation; 2-hydroxy-2,4-pentadienoate and salicylate from dibenzofuran: step 2/3. Functionally, responsible for meta-cleavage of the first aromatic ring of 2,2',3-trihydroxybiphenyl and 2,3-dihydroxybiphenyl. 2,2',3-trihydroxydiphenyl ether, catechol, 3-methylcatechol, and 4-methylcatechol are oxidized less efficiently and 3,4-dihydroxybiphenyl is oxidized considerably less efficiently. This Sphingomonas paucimobilis (Pseudomonas paucimobilis) protein is 2,2',3-trihydroxybiphenyl dioxygenase (dbfB).